We begin with the raw amino-acid sequence, 68 residues long: MTQTEIIITVAACLIVLAQGIFLFIDAKKRNHMAWVWGIVGLIQAPMPLICYYFFVIRPDRKKRGIKQ.

A run of 2 helical transmembrane segments spans residues 5–25 (EIIITVAACLIVLAQGIFLFI) and 37–57 (WGIVGLIQAPMPLICYYFFVI).

The protein resides in the cell membrane. Together with YxlE, is important for negative regulation of sigma Y activity, being the major negative regulator. This is Negative regulatory protein YxlD (yxlD) from Bacillus subtilis (strain 168).